Reading from the N-terminus, the 288-residue chain is Purine nucleoside phosphorylase (288 aa).

Phosphate is bound at residue arginine 65–asparagine 66. Residue methionine 201 participates in substrate binding. Threonine 202 contacts phosphate.

Belongs to the PNP/MTAP phosphorylase family. MTAP subfamily. As to quaternary structure, homotrimer.

The protein resides in the cytoplasm. Its subcellular location is the nucleus. It carries out the reaction a purine D-ribonucleoside + phosphate = a purine nucleobase + alpha-D-ribose 1-phosphate. Its pathway is purine metabolism; purine nucleoside salvage. Purine nucleoside phosphorylase involved in purine salvage. The protein is Purine nucleoside phosphorylase of Drosophila pseudoobscura pseudoobscura (Fruit fly).